We begin with the raw amino-acid sequence, 416 residues long: GTPase ERA1, chloroplastic (416 aa).

The transit peptide at 1–53 directs the protein to the chloroplast; it reads MELGLALRLVAPPPLLPCLSRRALSLPPDFVSSRVLRGRRIHASRLKHGAGVV. The Era-type G domain maps to 117-287; sequence RSGYVAVLGK…KEWILSKLPL (171 aa). The G1 stretch occupies residues 125 to 132; sequence GKPNVGKS. Residue 125–132 participates in GTP binding; the sequence is GKPNVGKS. Residues 151-155 form a G2 region; that stretch reads QTTRH. The segment at 172-175 is G3; the sequence is DTPG. Residues 172–176 and 237–240 each bind GTP; these read DTPGV and NKKD. Residues 237–240 are G4; it reads NKKD. A G5 region spans residues 266–268; it reads ISA. The region spanning 318-395 is the KH type-2 domain; sequence YRQEIPYSCQ…YLEVEVKVKE (78 aa).

This sequence belongs to the TRAFAC class TrmE-Era-EngA-EngB-Septin-like GTPase superfamily. Era GTPase family.

The protein localises to the plastid. The protein resides in the chloroplast stroma. Its subcellular location is the chloroplast nucleoid. Its function is as follows. Nuclear genome-encoded probable GTPase involved in ribosome biogenesis in chloroplasts. Plays a role in 16S rRNA maturation in plastids and may contribute to the assembly of the small (30S) ribosomal subunit. This Zea mays (Maize) protein is GTPase ERA1, chloroplastic.